A 250-amino-acid polypeptide reads, in one-letter code: NH(3)-dependent NAD(+) synthetase (250 aa).

Residue 30–37 participates in ATP binding; sequence GVSGGIDS. Position 36 (aspartate 36) interacts with Mg(2+). Residue arginine 117 participates in deamido-NAD(+) binding. Threonine 137 is a binding site for ATP. Position 142 (glutamate 142) interacts with Mg(2+). Lysine 150 and aspartate 157 together coordinate deamido-NAD(+). The ATP site is built by lysine 166 and serine 188. 234 to 235 contributes to the deamido-NAD(+) binding site; sequence HK.

It belongs to the NAD synthetase family. In terms of assembly, homodimer.

It carries out the reaction deamido-NAD(+) + NH4(+) + ATP = AMP + diphosphate + NAD(+) + H(+). It participates in cofactor biosynthesis; NAD(+) biosynthesis; NAD(+) from deamido-NAD(+) (ammonia route): step 1/1. Catalyzes the ATP-dependent amidation of deamido-NAD to form NAD. Uses ammonia as a nitrogen source. This is NH(3)-dependent NAD(+) synthetase from Mannheimia succiniciproducens (strain KCTC 0769BP / MBEL55E).